The following is a 255-amino-acid chain: Aliphatic sulfonates import ATP-binding protein SsuB (255 aa).

The ABC transporter domain maps to 7 to 231 (IKEKAFVQEG…PRNRTTPDFQ (225 aa)). Residue 39–46 (GPSGCGKS) coordinates ATP.

It belongs to the ABC transporter superfamily. Aliphatic sulfonates importer (TC 3.A.1.17.2) family. As to quaternary structure, the complex is composed of two ATP-binding proteins (SsuB), two transmembrane proteins (SsuC) and a solute-binding protein (SsuA).

Its subcellular location is the cell membrane. It carries out the reaction ATP + H2O + aliphatic sulfonate-[sulfonate-binding protein]Side 1 = ADP + phosphate + aliphatic sulfonateSide 2 + [sulfonate-binding protein]Side 1.. Functionally, part of the ABC transporter complex SsuABC involved in aliphatic sulfonates import. Responsible for energy coupling to the transport system. Is also involved in taurine transport. This is Aliphatic sulfonates import ATP-binding protein SsuB from Bacillus subtilis (strain 168).